We begin with the raw amino-acid sequence, 853 residues long: Auxin response factor 23 (853 aa).

The tract at residues 121 to 141 (KQQEDNGSTEEEVPSAPAAGH) is disordered. Positions 149–251 (FCKTLTASDT…ELRVGVRRAM (103 aa)) form a DNA-binding region, TF-B3. Disordered regions lie at residues 422 to 471 (ESEP…NNTP) and 647 to 723 (PAKS…QGVS). Residues 425–455 (PNGTQRTFQTQENATPKSGFGNSSELESAQK) show a composition bias toward polar residues. Residues 672 to 686 (EWRRPDVTEVEKCSD) are compositionally biased toward basic and acidic residues. The span at 706–723 (PSSQQASRNMSCKSQGVS) shows a compositional bias: polar residues. One can recognise a PB1 domain in the interval 725-809 (RSCKKVHKQG…HKIFIYTREE (85 aa)). Residues 815-853 (PGTLNSRSEDSHANSMERGSVGREMRGCLSTSSLNSENC) are disordered. The span at 843–853 (LSTSSLNSENC) shows a compositional bias: polar residues.

Belongs to the ARF family. As to quaternary structure, homodimers and heterodimers.

It localises to the nucleus. Functionally, auxin response factors (ARFs) are transcriptional factors that bind specifically to the DNA sequence 5'-TGTCTC-3' found in the auxin-responsive promoter elements (AuxREs). In Oryza sativa subsp. indica (Rice), this protein is Auxin response factor 23 (ARF23).